The chain runs to 153 residues: Cytochrome c-type biogenesis protein CcmE (153 aa).

Topologically, residues 1–7 (MTRKKRR) are cytoplasmic. Residues 8 to 28 (LYFVVLGMLALFAAAGLTLTA) form a helical; Signal-anchor for type II membrane protein membrane-spanning segment. Topologically, residues 29-153 (FQDNLVFFYS…PPTAAAAPAP (125 aa)) are periplasmic. Residues His121 and Tyr125 each contribute to the heme site. Residues 132–153 (ESLKASGKWQHGPPTAAAAPAP) form a disordered region. Positions 144 to 153 (PPTAAAAPAP) are enriched in low complexity.

This sequence belongs to the CcmE/CycJ family.

Its subcellular location is the cell inner membrane. In terms of biological role, heme chaperone required for the biogenesis of c-type cytochromes. Transiently binds heme delivered by CcmC and transfers the heme to apo-cytochromes in a process facilitated by CcmF and CcmH. The chain is Cytochrome c-type biogenesis protein CcmE from Rhodospirillum rubrum (strain ATCC 11170 / ATH 1.1.1 / DSM 467 / LMG 4362 / NCIMB 8255 / S1).